The following is a 476-amino-acid chain: Serine/threonine-protein kinase PBL36 (476 aa).

The region spanning 126 to 412 (FRPESLLGEG…VEALKPLPNL (287 aa)) is the Protein kinase domain. ATP is bound by residues 132 to 140 (LGEGGFGCV) and K164. Residue Y209 is modified to Phosphotyrosine. D259 (proton acceptor) is an active-site residue. S263 and S293 each carry phosphoserine. Residues T294 and T299 each carry the phosphothreonine modification. Y307 is subject to Phosphotyrosine. A disordered region spans residues 431–476 (NGVRTQGGGFVSRNGPPMRSLSSLNLPQASPYRYARQSPKPKGKEP).

It belongs to the protein kinase superfamily. Ser/Thr protein kinase family. As to quaternary structure, interacts with SD129. Phosphorylated by SD129 in response to the pathogen-associated molecular pattern (PAMP) 3-OH-C10:0, a medium-chain 3-hydroxy fatty acid.

The protein resides in the cell membrane. It catalyses the reaction L-seryl-[protein] + ATP = O-phospho-L-seryl-[protein] + ADP + H(+). It carries out the reaction L-threonyl-[protein] + ATP = O-phospho-L-threonyl-[protein] + ADP + H(+). Involved in chitin-triggered immune signaling and is required for reactive oxygen species (ROS) production. Acts downstream of SD129 in defense signaling triggered by the pathogen-associated molecular pattern (PAMP) 3-OH-C10:0, a medium-chain 3-hydroxy fatty acid. The sequence is that of Serine/threonine-protein kinase PBL36 from Arabidopsis thaliana (Mouse-ear cress).